A 447-amino-acid polypeptide reads, in one-letter code: Peptide chain release factor 1, mitochondrial (447 aa).

The N-terminal 63 residues, 1-63, are a transit peptide targeting the mitochondrion; sequence MNRRHLFAWL…LLNKNCSRRY (63 aa). Residues 299–363 are GGQ domain; it reads PKDLRIDTFR…LRARLYQQII (65 aa). Positions 313–315 match the GGQ motif; it reads GGQ. Gln-315 is modified (N5-methylglutamine).

This sequence belongs to the prokaryotic/mitochondrial release factor family. Methylation of glutamine in the GGQ triplet by HEMK1 is conserved from bacteria to mammals.

The protein localises to the mitochondrion. Its function is as follows. Mitochondrial peptide chain release factor that directs the termination of translation in response to the peptide chain non-canonical stop codons AGG and AGA. Non-canonical termination codons AGG and AGA are found at the end of MT-CO1/COX1 and MT-ND6/ND6 open reading frames, respectively. Recognizes non-canonical stop codons via a network of interactions between the codon, MTRF1 and the ribosomal RNA (rRNA): in contrast to other translation release factors, which identify the codon in the A-site via direct interactions of amino acid side chains with the bases, MTRF1 repositions the first 2 bases of the stop codon to use an intricate network of interactions that includes residues of the release factor, the rRNA of the small ribosomal subunit, as well as neighboring bases of the mRNA. The polypeptide is Peptide chain release factor 1, mitochondrial (MTRF1) (Bos taurus (Bovine)).